The sequence spans 329 residues: EDTGSEATNNTEVSLPKPPVIENGYVEHMIRYQCKPFYKLHTEGDGVYTLNSEKHWTNKAVGEKLPECEAVCGKPKNPVDQVQRIMGGSVDAKGSFPWQAKMVSHHNLTSGATLINEQWLLTTAKNLFLGHKDDAKANDIAPTLKLYVGKNQLVEVEKVVLHPDYSKVDIGLIKLKQKVPIDERVMPICLPSKDYAEVGRIGYVSGWGRNSNFNFTELLKYVMLPVADQDKCVQHYEGSTVPEKKSPKSPVGVQPILNEHTFCAGMSKFQEDTCYGDAGSAFAVHDQDEDTWYAAGILSFDKSCTVAEYGVYVKVPSVLAWVQETIAGN.

A glycan (N-linked (GlcNAc...) asparagine) is linked at asparagine 9. Residues valine 13 to alanine 70 form the Sushi domain. 2 cysteine pairs are disulfide-bonded: cysteine 34/cysteine 68 and cysteine 72/cysteine 189. Arginine 84 is a propeptide. Positions isoleucine 85–alanine 327 constitute a Peptidase S1 domain. Residues asparagine 107 and asparagine 214 are each glycosylated (N-linked (GlcNAc...) asparagine). Disulfide bonds link cysteine 232-cysteine 263 and cysteine 274-cysteine 304. Residues valine 241–serine 246 are interaction with CD163.

It belongs to the peptidase S1 family. Tetramer of two alpha and two beta chains; disulfide-linked. The hemoglobin/haptoglobin complex is composed of a haptoglobin dimer bound to two hemoglobin alpha-beta dimers. Interacts with CD163. Interacts with ERGIC3. As to expression, expressed by the liver and secreted in plasma.

Its subcellular location is the secreted. It is found in the extracellular space. In terms of biological role, as a result of hemolysis, hemoglobin is found to accumulate in the kidney and is secreted in the urine. Haptoglobin captures, and combines with free plasma hemoglobin to allow hepatic recycling of heme iron and to prevent kidney damage. Haptoglobin also acts as an antioxidant, has antibacterial activity and plays a role in modulating many aspects of the acute phase response. Hemoglobin/haptoglobin complexes are rapidly cleared by the macrophage CD163 scavenger receptor expressed on the surface of liver Kupfer cells through an endocytic lysosomal degradation pathway. This is Haptoglobin (HP) from Canis lupus familiaris (Dog).